The following is a 371-amino-acid chain: Queuine tRNA-ribosyltransferase (371 aa).

Aspartate 90 (proton acceptor) is an active-site residue. Substrate is bound by residues 90–94 (DSGGF), aspartate 144, glutamine 188, and glycine 215. The interval 246–252 (GVGTPED) is RNA binding. The active-site Nucleophile is aspartate 265. Residues 270 to 274 (TRNAR) are RNA binding; important for wobble base 34 recognition. Residues cysteine 303, cysteine 305, cysteine 308, and histidine 334 each contribute to the Zn(2+) site.

It belongs to the queuine tRNA-ribosyltransferase family. In terms of assembly, homodimer. Within each dimer, one monomer is responsible for RNA recognition and catalysis, while the other monomer binds to the replacement base PreQ1. Requires Zn(2+) as cofactor.

The enzyme catalyses 7-aminomethyl-7-carbaguanine + guanosine(34) in tRNA = 7-aminomethyl-7-carbaguanosine(34) in tRNA + guanine. It functions in the pathway tRNA modification; tRNA-queuosine biosynthesis. Its function is as follows. Catalyzes the base-exchange of a guanine (G) residue with the queuine precursor 7-aminomethyl-7-deazaguanine (PreQ1) at position 34 (anticodon wobble position) in tRNAs with GU(N) anticodons (tRNA-Asp, -Asn, -His and -Tyr). Catalysis occurs through a double-displacement mechanism. The nucleophile active site attacks the C1' of nucleotide 34 to detach the guanine base from the RNA, forming a covalent enzyme-RNA intermediate. The proton acceptor active site deprotonates the incoming PreQ1, allowing a nucleophilic attack on the C1' of the ribose to form the product. After dissociation, two additional enzymatic reactions on the tRNA convert PreQ1 to queuine (Q), resulting in the hypermodified nucleoside queuosine (7-(((4,5-cis-dihydroxy-2-cyclopenten-1-yl)amino)methyl)-7-deazaguanosine). The chain is Queuine tRNA-ribosyltransferase from Neisseria meningitidis serogroup C (strain 053442).